A 436-amino-acid polypeptide reads, in one-letter code: 3-ketoacyl-CoA thiolase (436 aa).

The active-site Acyl-thioester intermediate is the Cys-99. Catalysis depends on proton acceptor residues His-392 and Cys-422.

The protein belongs to the thiolase-like superfamily. Thiolase family. In terms of assembly, heterotetramer of two alpha chains (FadJ) and two beta chains (FadI).

The protein localises to the cytoplasm. The enzyme catalyses an acyl-CoA + acetyl-CoA = a 3-oxoacyl-CoA + CoA. The protein operates within lipid metabolism; fatty acid beta-oxidation. Functionally, catalyzes the final step of fatty acid oxidation in which acetyl-CoA is released and the CoA ester of a fatty acid two carbons shorter is formed. In Shigella dysenteriae serotype 1 (strain Sd197), this protein is 3-ketoacyl-CoA thiolase.